Consider the following 60-residue polypeptide: Homeobox protein engrailed-like (60 aa).

Residues 1–41 (GEQLCRLRAEFQASRYLTEERRTALARELRLNEAQIKIWFQ) constitute a DNA-binding region (homeobox).

Belongs to the engrailed homeobox family.

The protein resides in the nucleus. The protein is Homeobox protein engrailed-like of Lampetra planeri (Brook lamprey).